Here is a 949-residue protein sequence, read N- to C-terminus: Valine--tRNA ligase (949 aa).

The 'HIGH' region motif lies at proline 40 to histidine 50. The 'KMSKS' region signature appears at lysine 553–serine 557. Lysine 556 serves as a coordination point for ATP. The stretch at methionine 877–leucine 949 forms a coiled coil.

It belongs to the class-I aminoacyl-tRNA synthetase family. ValS type 1 subfamily. In terms of assembly, monomer.

The protein resides in the cytoplasm. The enzyme catalyses tRNA(Val) + L-valine + ATP = L-valyl-tRNA(Val) + AMP + diphosphate. In terms of biological role, catalyzes the attachment of valine to tRNA(Val). As ValRS can inadvertently accommodate and process structurally similar amino acids such as threonine, to avoid such errors, it has a 'posttransfer' editing activity that hydrolyzes mischarged Thr-tRNA(Val) in a tRNA-dependent manner. The chain is Valine--tRNA ligase from Idiomarina loihiensis (strain ATCC BAA-735 / DSM 15497 / L2-TR).